A 303-amino-acid polypeptide reads, in one-letter code: Peptidyl-prolyl isomerase CWC27 (303 aa).

The 147-residue stretch at 7 to 153 (ASGKCVLYTT…AEVTIPYFDG (147 aa)) folds into the PPIase cyclophilin-type domain. 2 disordered regions span residues 155–195 (SGQK…PPLD) and 208–274 (ERLT…TDLA).

It belongs to the cyclophilin-type PPIase family. CWC27 subfamily. As to quaternary structure, associated with the spliceosome.

The protein localises to the cytoplasm. The protein resides in the nucleus. It carries out the reaction [protein]-peptidylproline (omega=180) = [protein]-peptidylproline (omega=0). PPIases accelerate the folding of proteins. It catalyzes the cis-trans isomerization of proline imidic peptide bonds in oligopeptides. Involved in pre-mRNA splicing. This is Peptidyl-prolyl isomerase CWC27 (CWC27) from Eremothecium gossypii (strain ATCC 10895 / CBS 109.51 / FGSC 9923 / NRRL Y-1056) (Yeast).